A 283-amino-acid polypeptide reads, in one-letter code: Protoheme IX farnesyltransferase (283 aa).

Transmembrane regions (helical) follow at residues 6 to 26 (LLLT…AGFL), 35 to 55 (FGLF…GCVF), 85 to 105 (AIVF…FYTN), 106 to 126 (LLTL…YSIW), 131 to 151 (VYGT…GYCA), 160 to 180 (AFIL…SIAI), 207 to 227 (ILLY…FHFT), 230 to 250 (LYLI…LRGL), and 262 to 282 (MFRF…FDLV).

The protein belongs to the UbiA prenyltransferase family. Protoheme IX farnesyltransferase subfamily.

It is found in the cell inner membrane. The catalysed reaction is heme b + (2E,6E)-farnesyl diphosphate + H2O = Fe(II)-heme o + diphosphate. It participates in porphyrin-containing compound metabolism; heme O biosynthesis; heme O from protoheme: step 1/1. Converts heme B (protoheme IX) to heme O by substitution of the vinyl group on carbon 2 of heme B porphyrin ring with a hydroxyethyl farnesyl side group. The sequence is that of Protoheme IX farnesyltransferase from Protochlamydia amoebophila (strain UWE25).